The following is a 402-amino-acid chain: Type II NADH:quinone oxidoreductase (402 aa).

Residues 12 to 16 (GAGYA), 39 to 40 (NK), and V83 contribute to the FAD site. E172 is an active-site residue. Residues D302, 319 to 320 (AQ), and K379 each bind FAD.

It belongs to the NADH dehydrogenase family. The cofactor is FAD.

It localises to the cell membrane. It carries out the reaction a quinone + NADH + H(+) = a quinol + NAD(+). Its function is as follows. Alternative, nonproton pumping NADH:quinone oxidoreductase that delivers electrons to the respiratory chain by oxidation of NADH and reduction of quinones, and contributes to the regeneration of NAD(+). This chain is Type II NADH:quinone oxidoreductase, found in Staphylococcus haemolyticus (strain JCSC1435).